The primary structure comprises 31 residues: Cytochrome b6-f complex subunit 6 (31 aa).

The helical transmembrane segment at isoleucine 4 to serine 26 threads the bilayer.

This sequence belongs to the PetL family. The 4 large subunits of the cytochrome b6-f complex are cytochrome b6, subunit IV (17 kDa polypeptide, PetD), cytochrome f and the Rieske protein, while the 4 small subunits are PetG, PetL, PetM and PetN. The complex functions as a dimer.

The protein resides in the plastid. Its subcellular location is the chloroplast thylakoid membrane. Functionally, component of the cytochrome b6-f complex, which mediates electron transfer between photosystem II (PSII) and photosystem I (PSI), cyclic electron flow around PSI, and state transitions. PetL is important for photoautotrophic growth as well as for electron transfer efficiency and stability of the cytochrome b6-f complex. The sequence is that of Cytochrome b6-f complex subunit 6 from Liriodendron tulipifera (Tuliptree).